The following is a 378-amino-acid chain: Chaperone protein DnaJ (378 aa).

The J domain maps to 5-70 (DYYEVLGVAK…QKRAAYDQYG (66 aa)). The CR-type zinc finger occupies 138 to 216 (GYDTQIRVPS…CHGSGKVKET (79 aa)). Zn(2+)-binding residues include C151, C154, C168, C171, C190, C193, C204, and C207. CXXCXGXG motif repeat units follow at residues 151–158 (CEVCHGSG), 168–175 (CPTCHGQG), 190–197 (CPKCHGTG), and 204–211 (CAHCHGSG).

Belongs to the DnaJ family. As to quaternary structure, homodimer. It depends on Zn(2+) as a cofactor.

It is found in the cytoplasm. In terms of biological role, participates actively in the response to hyperosmotic and heat shock by preventing the aggregation of stress-denatured proteins and by disaggregating proteins, also in an autonomous, DnaK-independent fashion. Unfolded proteins bind initially to DnaJ; upon interaction with the DnaJ-bound protein, DnaK hydrolyzes its bound ATP, resulting in the formation of a stable complex. GrpE releases ADP from DnaK; ATP binding to DnaK triggers the release of the substrate protein, thus completing the reaction cycle. Several rounds of ATP-dependent interactions between DnaJ, DnaK and GrpE are required for fully efficient folding. Also involved, together with DnaK and GrpE, in the DNA replication of plasmids through activation of initiation proteins. The chain is Chaperone protein DnaJ from Burkholderia cenocepacia (strain HI2424).